Here is a 353-residue protein sequence, read N- to C-terminus: UDP-xylose transporter 2 (353 aa).

10 consecutive transmembrane segments (helical) span residues 7-27, 31-51, 75-95, 100-120, 132-152, 154-174, 194-214, 224-244, 250-270, and 280-300; these read FQLGTIGALSLSVVSSVSIVI, ALISTLGFTFATTLTSWHLLV, VLGFGVLNGISIGLLNLSLGF, FYQMTKLAIIPCTVVLETIFF, LVILLLGVGIATVTDLQLNML, SVLSLLAVITTCVAQIMTNTI, AITLFVTGPFLDGLLTNQNVF, FFIVLSCLISVSVNFSTFLVI, VTYQVLGHLKTCLVLAFGYLL, and ILGILVAVIGMVLYSYYCTLE. The tract at residues 308 to 353 is disordered; it reads TSTQLPQMDENEKDPLVSAENGSGLISDNGVQKQDPVWNSNKDFQA. Over residues 327 to 353 the composition is skewed to polar residues; it reads ENGSGLISDNGVQKQDPVWNSNKDFQA. Phosphoserine is present on serine 334.

The protein belongs to the TPT transporter family. TPT (TC 2.A.7.9) subfamily. As to expression, ubiquitous.

It is found in the golgi apparatus membrane. In terms of biological role, nucleotide-sugar transporter that transports UDP-xylose and UMP in a strict counter-exchange mode. The protein is UDP-xylose transporter 2 of Arabidopsis thaliana (Mouse-ear cress).